Reading from the N-terminus, the 642-residue chain is Palmitoyltransferase akr1 (642 aa).

6 ANK repeats span residues 1-29, 33-62, 67-96, 100-129, 133-162, and 166-196; these read MGSL…DVNA, GGAT…DVNA, LQAA…DPLL, QGFN…SVDL, QQHT…DVLA, and DKMT…PCTA. Topologically, residues 1–256 are cytoplasmic; it reads MGSLFLAASQ…SKFQFSQKTF (256 aa). The next 2 membrane-spanning stretches (helical) occupy residues 257–277 and 278–298; these read IIFC…IMSI and CPMV…FKYI. Topologically, residues 299-316 are cytoplasmic; it reads TTCIHANIDIVHFYLETP. Residues 317–337 form a helical membrane-spanning segment; the sequence is FLAGIFSSIFFWVWCHSLLYI. At 338 to 343 the chain is on the lumenal side; the sequence is VPKTLP. Residues 344–364 form a helical membrane-spanning segment; it reads IKPLSSLLFVLISFTCIGLYV. Residues 365-444 lie on the Cytoplasmic side of the membrane; the sequence is RTAFQNPGYV…NCVGARNHRT (80 aa). Residues 400–450 enclose the DHHC domain; that stretch reads HYCLKCFQVKPPRSYHCGACKRCINRYDHHCPWTGNCVGARNHRTFLLFVF. Cys430 acts as the S-palmitoyl cysteine intermediate in catalysis. A helical membrane pass occupies residues 445–465; it reads FLLFVFTLSTLIPIYFYVAFY. Over 466-496 the chain is Lumenal; the sequence is YLQNIPIQKKYESYRCLFISGTICQWSLKDM. Residues 497–517 traverse the membrane as a helical segment; the sequence is FVLVASLTLFVNWCWVVVLAF. Residues 518–642 lie on the Cytoplasmic side of the membrane; it reads TQICQVAHNV…GRQDEATRHV (125 aa).

This sequence belongs to the DHHC palmitoyltransferase family. AKR/ZDHHC17 subfamily.

The protein resides in the early endosome membrane. It localises to the golgi apparatus membrane. It carries out the reaction L-cysteinyl-[protein] + hexadecanoyl-CoA = S-hexadecanoyl-L-cysteinyl-[protein] + CoA. Its function is as follows. Palmitoyltransferase specific for casein kinase 1. This is Palmitoyltransferase akr1 (akr1) from Schizosaccharomyces pombe (strain 972 / ATCC 24843) (Fission yeast).